The sequence spans 161 residues: uncharacterized protein (161 aa).

Positions 1 to 29 form a coiled coil; sequence MTLYDTVKELQEKLRNGEIEINTFLERLG.

This is an uncharacterized protein from Acidianus convivator (ATV).